We begin with the raw amino-acid sequence, 318 residues long: Methionyl-tRNA formyltransferase (318 aa).

112-115 (SILP) serves as a coordination point for (6S)-5,6,7,8-tetrahydrofolate.

The protein belongs to the Fmt family.

The enzyme catalyses L-methionyl-tRNA(fMet) + (6R)-10-formyltetrahydrofolate = N-formyl-L-methionyl-tRNA(fMet) + (6S)-5,6,7,8-tetrahydrofolate + H(+). Attaches a formyl group to the free amino group of methionyl-tRNA(fMet). The formyl group appears to play a dual role in the initiator identity of N-formylmethionyl-tRNA by promoting its recognition by IF2 and preventing the misappropriation of this tRNA by the elongation apparatus. The sequence is that of Methionyl-tRNA formyltransferase from Shewanella oneidensis (strain ATCC 700550 / JCM 31522 / CIP 106686 / LMG 19005 / NCIMB 14063 / MR-1).